A 298-amino-acid chain; its full sequence is Homoserine kinase (298 aa).

85–95 is an ATP binding site; the sequence is PMGGLGSSAAS.

It belongs to the GHMP kinase family. Homoserine kinase subfamily.

It localises to the cytoplasm. It catalyses the reaction L-homoserine + ATP = O-phospho-L-homoserine + ADP + H(+). It functions in the pathway amino-acid biosynthesis; L-threonine biosynthesis; L-threonine from L-aspartate: step 4/5. Catalyzes the ATP-dependent phosphorylation of L-homoserine to L-homoserine phosphate. The chain is Homoserine kinase from Methanopyrus kandleri (strain AV19 / DSM 6324 / JCM 9639 / NBRC 100938).